The following is a 256-amino-acid chain: 1-(5-phosphoribosyl)-5-[(5-phosphoribosylamino)methylideneamino] imidazole-4-carboxamide isomerase (256 aa).

Asp8 acts as the Proton acceptor in catalysis. Asp129 (proton donor) is an active-site residue.

This sequence belongs to the HisA/HisF family.

Its subcellular location is the cytoplasm. It catalyses the reaction 1-(5-phospho-beta-D-ribosyl)-5-[(5-phospho-beta-D-ribosylamino)methylideneamino]imidazole-4-carboxamide = 5-[(5-phospho-1-deoxy-D-ribulos-1-ylimino)methylamino]-1-(5-phospho-beta-D-ribosyl)imidazole-4-carboxamide. It participates in amino-acid biosynthesis; L-histidine biosynthesis; L-histidine from 5-phospho-alpha-D-ribose 1-diphosphate: step 4/9. This chain is 1-(5-phosphoribosyl)-5-[(5-phosphoribosylamino)methylideneamino] imidazole-4-carboxamide isomerase, found in Prochlorococcus marinus (strain NATL1A).